Reading from the N-terminus, the 205-residue chain is Small ribosomal subunit protein mS26 (205 aa).

The transit peptide at Met1–Arg27 directs the protein to the mitochondrion.

It belongs to the mitochondrion-specific ribosomal protein mS26 family. Component of the mitochondrial small ribosomal subunit (mt-SSU). Mature mammalian 55S mitochondrial ribosomes consist of a small (28S) and a large (39S) subunit. The 28S small subunit contains a 12S ribosomal RNA (12S mt-rRNA) and 30 different proteins. The 39S large subunit contains a 16S rRNA (16S mt-rRNA), a copy of mitochondrial valine transfer RNA (mt-tRNA(Val)), which plays an integral structural role, and 52 different proteins.

Its subcellular location is the mitochondrion. The sequence is that of Small ribosomal subunit protein mS26 (MRPS26) from Homo sapiens (Human).